A 378-amino-acid chain; its full sequence is Ferredoxin--NADP reductase, root isozyme 1, chloroplastic (378 aa).

The N-terminal 65 residues, 1 to 65 (MALSTTPSQM…KRSTICMSLQ (65 aa)), are a transit peptide targeting the chloroplast. Residues 93–221 (KEPYTATIVS…TGPSGKVMLL (129 aa)) form the FAD-binding FR-type domain. The cysteines at positions 196 and 201 are disulfide-linked. Phosphoserine is present on Ser-197. The residue at position 229 (Thr-229) is a Phosphothreonine. 231–249 (IMIATGTGVAPYRGYLRRM) provides a ligand contact to NADP(+). Positions 349–373 (LKRVAEERGESWEQKLTQLRKNKQW) form a coiled coil.

The protein belongs to the ferredoxin--NADP reductase type 1 family. It depends on FAD as a cofactor. In terms of tissue distribution, expressed in shoots and roots. Less abundant in roots than RFNR2.

The protein localises to the plastid. It is found in the chloroplast. The enzyme catalyses 2 reduced [2Fe-2S]-[ferredoxin] + NADP(+) + H(+) = 2 oxidized [2Fe-2S]-[ferredoxin] + NADPH. Its function is as follows. Maintains the supply of reduced ferredoxin under non-photosynthetic conditions. This is Ferredoxin--NADP reductase, root isozyme 1, chloroplastic (RFNR1) from Arabidopsis thaliana (Mouse-ear cress).